Consider the following 459-residue polypeptide: 4,4'-diaponeurosporen-aldehyde dehydrogenase (459 aa).

Residues 114 to 115 and 188 to 189 each bind NAD(+); these read FN and GS. Residue Glu-210 is the Proton acceptor of the active site. Met-211 provides a ligand contact to NAD(+). Cys-244 acts as the Nucleophile in catalysis. NAD(+) is bound at residue Glu-336.

Belongs to the aldehyde dehydrogenase family.

The enzyme catalyses 4,4'-diaponeurosporenal + NAD(+) + H2O = 4,4'-diaponeurosporenoate + NADH + 2 H(+). Its pathway is carotenoid biosynthesis; staphyloxanthin biosynthesis; staphyloxanthin from farnesyl diphosphate. In terms of biological role, involved in the biosynthesis of the yellow-orange carotenoid staphyloxanthin, which plays a role in the virulence via its protective function against oxidative stress. Catalyzes the oxidation of 4,4'-diaponeurosporen-4-al to yield 4,4'-diaponeurosporenoic acid. The chain is 4,4'-diaponeurosporen-aldehyde dehydrogenase from Staphylococcus aureus (strain NCTC 8325 / PS 47).